A 365-amino-acid polypeptide reads, in one-letter code: Peptide chain release factor 1 (365 aa).

Gln240 carries the post-translational modification N5-methylglutamine.

Belongs to the prokaryotic/mitochondrial release factor family. Post-translationally, methylated by PrmC. Methylation increases the termination efficiency of RF1.

Its subcellular location is the cytoplasm. Its function is as follows. Peptide chain release factor 1 directs the termination of translation in response to the peptide chain termination codons UAG and UAA. The polypeptide is Peptide chain release factor 1 (Bifidobacterium animalis subsp. lactis (strain AD011)).